The sequence spans 331 residues: Ketol-acid reductoisomerase (NADP(+)) (331 aa).

A KARI N-terminal Rossmann domain is found at Val2–Thr182. Residues Phe25 to Gln28, Ser51, and Ser53 each bind NADP(+). His108 is an active-site residue. Gly134 contributes to the NADP(+) binding site. In terms of domain architecture, KARI C-terminal knotted spans Thr183–Ile328. 4 residues coordinate Mg(2+): Asp191, Glu195, Glu227, and Glu231. Ser252 contributes to the substrate binding site.

It belongs to the ketol-acid reductoisomerase family. Mg(2+) serves as cofactor.

The catalysed reaction is (2R)-2,3-dihydroxy-3-methylbutanoate + NADP(+) = (2S)-2-acetolactate + NADPH + H(+). It carries out the reaction (2R,3R)-2,3-dihydroxy-3-methylpentanoate + NADP(+) = (S)-2-ethyl-2-hydroxy-3-oxobutanoate + NADPH + H(+). Its pathway is amino-acid biosynthesis; L-isoleucine biosynthesis; L-isoleucine from 2-oxobutanoate: step 2/4. The protein operates within amino-acid biosynthesis; L-valine biosynthesis; L-valine from pyruvate: step 2/4. In terms of biological role, involved in the biosynthesis of branched-chain amino acids (BCAA). Catalyzes an alkyl-migration followed by a ketol-acid reduction of (S)-2-acetolactate (S2AL) to yield (R)-2,3-dihydroxy-isovalerate. In the isomerase reaction, S2AL is rearranged via a Mg-dependent methyl migration to produce 3-hydroxy-3-methyl-2-ketobutyrate (HMKB). In the reductase reaction, this 2-ketoacid undergoes a metal-dependent reduction by NADPH to yield (R)-2,3-dihydroxy-isovalerate. The polypeptide is Ketol-acid reductoisomerase (NADP(+)) (Parafrankia sp. (strain EAN1pec)).